Consider the following 329-residue polypeptide: Serpentine receptor class alpha-6 (329 aa).

7 helical membrane-spanning segments follow: residues 26 to 46 (VDLLAIILAFFASYFAIKIVI), 68 to 88 (LYQISYGIEAIGMLYRGFFML), 104 to 124 (YFKVLMIGTSGMIFGQTGLLI), 143 to 163 (IGVCISLIVLVCSTSSGFIIL), 187 to 207 (NLFSILSTVLTLFNLIVSIFI), 238 to 258 (ICFLALSQFLWMFMYSFGILI), and 273 to 293 (FWIAWCYTMPFIALMFPVLLI).

The protein belongs to the nematode receptor-like protein sra family.

It localises to the membrane. This is Serpentine receptor class alpha-6 (sra-6) from Caenorhabditis elegans.